We begin with the raw amino-acid sequence, 338 residues long: Ornithine carbamoyltransferase, catabolic (338 aa).

Residues 58 to 61, Gln-85, Arg-109, and 136 to 139 each bind carbamoyl phosphate; these read STRT and HPTQ. Residues Asn-168, Asp-232, and 236-237 each bind L-ornithine; that span reads SM. Carbamoyl phosphate is bound by residues 273–274 and Arg-318; that span reads CL.

This sequence belongs to the aspartate/ornithine carbamoyltransferase superfamily. OTCase family.

It is found in the cytoplasm. The enzyme catalyses carbamoyl phosphate + L-ornithine = L-citrulline + phosphate + H(+). It participates in amino-acid degradation; L-arginine degradation via ADI pathway; carbamoyl phosphate from L-arginine: step 2/2. In terms of biological role, reversibly catalyzes the transfer of the carbamoyl group from carbamoyl phosphate (CP) to the N(epsilon) atom of ornithine (ORN) to produce L-citrulline. In Streptococcus pneumoniae serotype 4 (strain ATCC BAA-334 / TIGR4), this protein is Ornithine carbamoyltransferase, catabolic.